A 233-amino-acid chain; its full sequence is Large ribosomal subunit protein uL22m (233 aa).

The protein belongs to the universal ribosomal protein uL22 family. In terms of assembly, component of the mitochondrial ribosome large subunit (39S) which comprises a 16S rRNA and about 50 distinct proteins.

It localises to the mitochondrion. The polypeptide is Large ribosomal subunit protein uL22m (mRpL22) (Drosophila pseudoobscura pseudoobscura (Fruit fly)).